Here is a 566-residue protein sequence, read N- to C-terminus: Beta-1,2-xylosyltransferease XAX1 (566 aa).

The tract at residues 1–25 is disordered; the sequence is MTSTAYSRPSKLPGGGNGSDRRLPP. Topologically, residues 1 to 43 are cytoplasmic; sequence MTSTAYSRPSKLPGGGNGSDRRLPPRLMRGLTTKIEPKKLGVG. Residues 44-64 traverse the membrane as a helical; Signal-anchor for type II membrane protein segment; it reads LLAGCCLALLTYVSLAKLFAI. The Lumenal portion of the chain corresponds to 65 to 566; the sequence is YSPVFASTAN…LLQALDRLQQ (502 aa). The N-linked (GlcNAc...) asparagine glycan is linked to Asn74. The segment at 78–180 is disordered; that stretch reads LMQNSPPSSP…AAGGDTKIKC (103 aa). The span at 84–94 shows a compositional bias: pro residues; it reads PSSPETGPIPP. Asn104, Asn368, Asn429, Asn515, and Asn549 each carry an N-linked (GlcNAc...) asparagine glycan.

It belongs to the glycosyltransferase 61 family. Highly expressed in young panicles.

It is found in the golgi apparatus membrane. Its pathway is glycan metabolism. Its function is as follows. Glycosyltransferase involved in the xylosylation of xylan, the major hemicellulose (non-cellulosic component) of primary and secondary walls of angiosperms. Possesses beta-1,2-xylosyltransferase activity, transferring xylose from UDP-xylose to the xylan backbone. This Oryza sativa subsp. japonica (Rice) protein is Beta-1,2-xylosyltransferease XAX1.